The following is a 442-amino-acid chain: D-serine dehydratase (442 aa).

Lys-118 carries the post-translational modification N6-(pyridoxal phosphate)lysine.

The protein belongs to the serine/threonine dehydratase family. DsdA subfamily. Monomer. Pyridoxal 5'-phosphate is required as a cofactor.

The catalysed reaction is D-serine = pyruvate + NH4(+). In Escherichia coli O6:H1 (strain CFT073 / ATCC 700928 / UPEC), this protein is D-serine dehydratase.